The following is a 148-amino-acid chain: Ribonuclease pancreatic (148 aa).

Residues 1-25 (MGLEKSLILLPLLVLVFGWVQPSLG) form the signal peptide. Residues lysine 32 and arginine 35 each coordinate substrate. Histidine 37 serves as the catalytic Proton acceptor. Cystine bridges form between cysteine 50–cysteine 108, cysteine 64–cysteine 119, cysteine 82–cysteine 134, and cysteine 89–cysteine 96. The N-linked (GlcNAc...) asparagine glycan is linked to asparagine 58. 65–69 (KPVNT) provides a ligand contact to substrate. Asparagine 86 carries an N-linked (GlcNAc...) asparagine glycan. Residues lysine 90 and arginine 109 each coordinate substrate. Catalysis depends on histidine 143, which acts as the Proton donor.

This sequence belongs to the pancreatic ribonuclease family. In terms of assembly, monomer. Interacts with and forms tight 1:1 complexes with RNH1. Dimerization of two such complexes may occur. Interaction with RNH1 inhibits this protein. In terms of tissue distribution, pancreas.

Its subcellular location is the secreted. It carries out the reaction an [RNA] containing cytidine + H2O = an [RNA]-3'-cytidine-3'-phosphate + a 5'-hydroxy-ribonucleotide-3'-[RNA].. It catalyses the reaction an [RNA] containing uridine + H2O = an [RNA]-3'-uridine-3'-phosphate + a 5'-hydroxy-ribonucleotide-3'-[RNA].. Endonuclease that catalyzes the cleavage of RNA on the 3' side of pyrimidine nucleotides. Acts on single-stranded and double-stranded RNA. The chain is Ribonuclease pancreatic (RNASE1) from Myodes glareolus (Bank vole).